The sequence spans 414 residues: Protein FAM81B (414 aa).

Positions 1–13 (MTSETDINKSASP) are enriched in polar residues. Residues 1–43 (MTSETDINKSASPTAAAKEQPEEPDGPLPGSASEQEKKVRFSP) form a disordered region. Coiled-coil stretches lie at residues 70 to 94 (NTQR…LEQA), 121 to 149 (LLEN…QIKA), 188 to 223 (KLSG…NLDT), and 266 to 414 (LNLY…LQES).

It belongs to the FAM81 family.

The sequence is that of Protein FAM81B (FAM81B) from Bos taurus (Bovine).